A 336-amino-acid chain; its full sequence is Potassium channel subfamily K member 1 (336 aa).

At 1–20 (MLQSLAGSSCVRLVERHRSA) the chain is on the cytoplasmic side. A helical membrane pass occupies residues 21–41 (WCFGLLVLGYLLYLVFGAVVF). Residues 42-103 (SSVELPYEDL…SNASGNWNWD (62 aa)) lie on the Extracellular side of the membrane. An N-linked (GlcNAc...) asparagine glycan is attached at Asn-95. The segment at residues 104-116 (FTSALFFASTVLS) is an intramembrane region (helical). An intramembrane segment occupies 117-122 (TTGYGH). The segment at 117 to 122 (TTGYGH) is selectivity filter 1. Residues 123-132 (TVPLSDGGKA) are Extracellular-facing. The helical transmembrane segment at 133–156 (FCIIYSVIGIPFTLLFLTAVVQRI) threads the bilayer. Residues 157 to 181 (TVHVTRRPVLYFHIRWGFSKQMVGI) lie on the Cytoplasmic side of the membrane. The chain crosses the membrane as a helical span at residues 182-202 (VHAVVLGFVTVSCFFFIPAAV). The Extracellular segment spans residues 203–211 (FSVLEDDWN). The segment at residues 212-224 (FLESFYFCFISLS) is an intramembrane region (helical). Residues 225 to 230 (TIGLGD) form a selectivity filter 2 region. An intramembrane segment occupies 225 to 231 (TIGLGDY). Over 232 to 243 (VPGEGYNQKFRE) the chain is Extracellular. The chain crosses the membrane as a helical span at residues 244 to 267 (LYKIGITCYLLLGLIAMLVVLETF). Topologically, residues 268–336 (CELHELKKFR…SAYAEDSASH (69 aa)) are cytoplasmic. A Glycyl lysine isopeptide (Lys-Gly) (interchain with G-Cter in SUMO) cross-link involves residue Lys-274. The important for intracellular retention in recycling endosomes stretch occupies residues 293–299 (IVEHDQL).

Belongs to the two pore domain potassium channel (TC 1.A.1.8) family. As to quaternary structure, homodimer; disulfide-linked. Heterodimer with KCNK2; disulfide-linked. In astrocytes, forms mostly heterodimeric potassium channels with KCNK2, with only a minor proportion of functional channels containing homodimeric KCNK1. Interacts with KCNK3 and KCNK9, forming functional heterodimeric channels. Interacts with GNG4. Identified in a complex with PSD and ARF6; interacts only with PSD that is bound to ARF6. Interacts with UBE2I. In terms of processing, sumoylation is controversial. Sumoylated by UBE2I. Not sumoylated when expressed in xenopus oocytes or mammalian cells. Sumoylation inactivates the channel, but does not interfere with expression at the cell membrane. Sumoylation of a single subunit is sufficient to silence the dimeric channel. Sumoylation of KCNK1 is sufficient to silence heterodimeric channels formed by KCNK1 and KCNK3 or KCNK9. Desumoylated by SENP1; this activates the channel. Desumoylated by SENP1; this strongly increases halothane-mediated activation of heterodimeric channels formed with KCNK9. SENP1 treatment has no effect.

The protein localises to the cell membrane. It is found in the recycling endosome. Its subcellular location is the synaptic cell membrane. It localises to the cytoplasmic vesicle. The protein resides in the perikaryon. The protein localises to the cell projection. It is found in the dendrite. Its subcellular location is the apical cell membrane. It carries out the reaction K(+)(in) = K(+)(out). The enzyme catalyses NH4(+)(in) = NH4(+)(out). The catalysed reaction is Na(+)(in) = Na(+)(out). It catalyses the reaction Rb(+)(in) = Rb(+)(out). It carries out the reaction Cs(+)(in) = Cs(+)(out). The enzyme catalyses Li(+)(in) = Li(+)(out). The catalysed reaction is L-glutamate(out) = L-glutamate(in). It catalyses the reaction chloride(in) = chloride(out). Its function is as follows. Ion channel that contributes to passive transmembrane potassium transport and to the regulation of the resting membrane potential in brain astrocytes, but also in kidney and in other tissues. Forms dimeric channels through which potassium ions pass in accordance with their electrochemical gradient. The channel is selective for K(+) ions at physiological potassium concentrations and at neutral pH, but becomes permeable to Na(+) at subphysiological K(+) levels and upon acidification of the extracellular medium. The homodimer has very low potassium channel activity, when expressed in heterologous systems, and can function as weakly inward rectifying potassium channel. Channel activity is modulated by activation of serotonin receptors. Heterodimeric channels containing KCNK1 and KCNK2 have much higher activity, and may represent the predominant form in astrocytes. Heterodimeric channels containing KCNK1 and KCNK3 or KCNK9 have much higher activity. Heterodimeric channels formed by KCNK1 and KCNK9 may contribute to halothane-sensitive currents. Mediates outward rectifying potassium currents in dentate gyrus granule cells and contributes to the regulation of their resting membrane potential. Contributes to the regulation of action potential firing in dentate gyrus granule cells and down-regulates their intrinsic excitability. In astrocytes, the heterodimer formed by KCNK1 and KCNK2 is required for rapid glutamate release in response to activation of G-protein coupled receptors, such as F2R and CNR1. Required for normal ion and water transport in the kidney. Contributes to the regulation of the resting membrane potential of pancreatic beta cells. The low channel activity of homodimeric KCNK1 may be due to sumoylation. The low channel activity may be due to rapid internalization from the cell membrane and retention in recycling endosomes. Permeable to monovalent cations with ion selectivity for K(+) &gt; Rb(+) &gt;&gt; NH4(+) &gt;&gt; Cs(+) = Na(+) = Li(+). This Cavia porcellus (Guinea pig) protein is Potassium channel subfamily K member 1.